The following is a 464-amino-acid chain: ATP synthase subunit beta (464 aa).

153-160 is a binding site for ATP; sequence GGAGVGKT.

This sequence belongs to the ATPase alpha/beta chains family. As to quaternary structure, F-type ATPases have 2 components, CF(1) - the catalytic core - and CF(0) - the membrane proton channel. CF(1) has five subunits: alpha(3), beta(3), gamma(1), delta(1), epsilon(1). CF(0) has three main subunits: a(1), b(2) and c(9-12). The alpha and beta chains form an alternating ring which encloses part of the gamma chain. CF(1) is attached to CF(0) by a central stalk formed by the gamma and epsilon chains, while a peripheral stalk is formed by the delta and b chains.

The protein resides in the cell membrane. The catalysed reaction is ATP + H2O + 4 H(+)(in) = ADP + phosphate + 5 H(+)(out). Functionally, produces ATP from ADP in the presence of a proton gradient across the membrane. The catalytic sites are hosted primarily by the beta subunits. The chain is ATP synthase subunit beta from Clostridium novyi (strain NT).